The sequence spans 482 residues: Nuclear transcription factor Y subunit nfya-1 (482 aa).

The segment at 1-160 (MNGASRGDVQ…NGSYIQYNEP (160 aa)) is disordered. Polar residues predominate over residues 72 to 93 (SSPNVQTQCHQPPVVRSQTHQA). Residues 94 to 110 (SVSQTTPTQTTPSQYTP) are compositionally biased toward low complexity. Polar residues-rich tracts occupy residues 126 to 135 (HVTPSQQQRI) and 144 to 160 (VSQS…YNEP). The short motif at 306–329 (LVNPKQFNRIMRRREMRQQLEASG) is the Subunit association domain (SAD) element. The segment at residues 336–361 (QKYLHESRHLHALKRKRGLDGRFDNT) is a DNA-binding region (NFYA/HAP2-type). The segment at 344 to 414 (HLHALKRKRG…QPKGGIVNSS (71 aa)) is disordered. Over residues 353–362 (GLDGRFDNTK) the composition is skewed to basic and acidic residues. The segment covering 363 to 375 (TAESSSMVSSTTS) has biased composition (low complexity).

This sequence belongs to the NFYA/HAP2 subunit family. Forms a heterotrimeric transcription factor complex (nfya-1-NF-Y complex) composed of nfya-1, nfyb-1 and nfyc-1, which binds to 5'-CCAAT-3' box motif in the promoters of its target genes. Interacts with the nfyb-1 and nfyc-1 dimer; the interaction is required for subsequent binding to the 5'-CCAAT-3' box motif in DNA. Does not interact with either nfyb-1 or nfyc-1 in their monomeric form. Interacts with mes-3. As to expression, expressed in certain parts of the gonads with high expression in fertilized oocytes in the uterus and mature oocytes from the distal to the proximal arm of the gonad, but weak expression in the syncytial ovaries and immature oocytes at the beginning of the proximal arm of the gonad. Highly expressed in the head ganglia neurons and the developing hermaphrodite vulva and male tail. Weakly expressed in most somatic cells. Not expressed in the intestine, the hypodermis, body wall muscle surrounding the pseudocoelomic space, secretory cells in the pharyngeal terminal bulb wall, in the small ganglia surrounding the pharynx and in the neurons running anteriorly to the sensory organs in the head.

It localises to the nucleus. Functionally, component of the sequence-specific heterotrimeric transcription factor (nfya-1-NF-Y) which specifically recognizes a 5'-CCAAT-3' box motif found in the promoters of its target genes to regulate their expression and control cellular identity in particular tissue types. In association with the components in the nfya-1-NF-Y complex, represses the expression of the T-box transcription factor tbx-2 throughout larval development, which most likely restricts its expression to certain tissues. May act to repress txb-2 expression in conjunction with tbx-2 itself, which has an autoregulatory role. With the components in this complex, negatively regulates the expression of the homeobox protein egl-5 to spatially restrict its expression in tissues such as the head. May regulate egl-5 expression in association with the mes-2-mes-3-mes-6 complex. This is Nuclear transcription factor Y subunit nfya-1 from Caenorhabditis elegans.